Consider the following 330-residue polypeptide: Mycothiol acetyltransferase (330 aa).

N-acetyltransferase domains follow at residues 5–142 (LVTD…MPLR) and 171–328 (VRLR…APRP). Position 36 (Glu36) interacts with 1D-myo-inositol 2-(L-cysteinylamino)-2-deoxy-alpha-D-glucopyranoside. Residue 80–82 (VVV) participates in acetyl-CoA binding. Residues 142 to 161 (RDIAGDEPGGPWEAPELPEP) are disordered. Residues Glu198, Lys238, and Glu254 each contribute to the 1D-myo-inositol 2-(L-cysteinylamino)-2-deoxy-alpha-D-glucopyranoside site. Acetyl-CoA-binding positions include 258 to 260 (VGV) and 265 to 271 (QGSGLGR). Residue Tyr292 coordinates 1D-myo-inositol 2-(L-cysteinylamino)-2-deoxy-alpha-D-glucopyranoside. 297–302 (NEAAVR) is an acetyl-CoA binding site.

This sequence belongs to the acetyltransferase family. MshD subfamily. In terms of assembly, monomer.

It carries out the reaction 1D-myo-inositol 2-(L-cysteinylamino)-2-deoxy-alpha-D-glucopyranoside + acetyl-CoA = mycothiol + CoA + H(+). Its function is as follows. Catalyzes the transfer of acetyl from acetyl-CoA to desacetylmycothiol (Cys-GlcN-Ins) to form mycothiol. The protein is Mycothiol acetyltransferase of Nocardiopsis dassonvillei (strain ATCC 23218 / DSM 43111 / CIP 107115 / JCM 7437 / KCTC 9190 / NBRC 14626 / NCTC 10488 / NRRL B-5397 / IMRU 509) (Actinomadura dassonvillei).